Reading from the N-terminus, the 1370-residue chain is DNA-directed RNA polymerase subunit beta (1370 aa).

This sequence belongs to the RNA polymerase beta chain family. As to quaternary structure, the RNAP catalytic core consists of 2 alpha, 1 beta, 1 beta' and 1 omega subunit. When a sigma factor is associated with the core the holoenzyme is formed, which can initiate transcription.

The enzyme catalyses RNA(n) + a ribonucleoside 5'-triphosphate = RNA(n+1) + diphosphate. DNA-dependent RNA polymerase catalyzes the transcription of DNA into RNA using the four ribonucleoside triphosphates as substrates. This chain is DNA-directed RNA polymerase subunit beta, found in Delftia acidovorans (strain DSM 14801 / SPH-1).